A 262-amino-acid polypeptide reads, in one-letter code: Indole-3-glycerol phosphate synthase (262 aa).

This sequence belongs to the TrpC family.

The enzyme catalyses 1-(2-carboxyphenylamino)-1-deoxy-D-ribulose 5-phosphate + H(+) = (1S,2R)-1-C-(indol-3-yl)glycerol 3-phosphate + CO2 + H2O. It participates in amino-acid biosynthesis; L-tryptophan biosynthesis; L-tryptophan from chorismate: step 4/5. This Leptothrix cholodnii (strain ATCC 51168 / LMG 8142 / SP-6) (Leptothrix discophora (strain SP-6)) protein is Indole-3-glycerol phosphate synthase.